Here is a 397-residue protein sequence, read N- to C-terminus: MTATDPVANLQTLIRCPSVTPAEGGALSALDAMLAPLGFTVDKVKASEAGTADIENLYARLGKDGPHLMFAGHTDVVPVGDEADWTHPPFAAEISKGELFGRGAVDMKGGIACFIAAVARHIEKNGPPKGSISFLITGDEEGPAINGTIKLLRWAAERGERWDACLVGEPTNPDRLGDMIKIGRRGSLSGKITVHGVQGHAAYPHLADNPVRGMLQLTQALMDPPFDGGTDDFQPSNLEVTTVDVGNPATNVIPAKASASFNIRFNDSWTAETLRAEILRRLDAAAGDGRLRPGREPVKYDIVWADRPSHVFLTRNNALIASLSSAVEGVIGRSPKLSTTGGTSDARFIKDYCPVVEFGLVGQTMHMVDERVAVSDLETLTAIYETFIAHWFANAGA.

Position 73 (His73) interacts with Zn(2+). Residue Asp75 is part of the active site. Residue Asp106 coordinates Zn(2+). The active-site Proton acceptor is the Glu140. Glu141, Glu169, and His366 together coordinate Zn(2+).

This sequence belongs to the peptidase M20A family. DapE subfamily. Homodimer. It depends on Zn(2+) as a cofactor. The cofactor is Co(2+).

The enzyme catalyses N-succinyl-(2S,6S)-2,6-diaminopimelate + H2O = (2S,6S)-2,6-diaminopimelate + succinate. The protein operates within amino-acid biosynthesis; L-lysine biosynthesis via DAP pathway; LL-2,6-diaminopimelate from (S)-tetrahydrodipicolinate (succinylase route): step 3/3. Catalyzes the hydrolysis of N-succinyl-L,L-diaminopimelic acid (SDAP), forming succinate and LL-2,6-diaminopimelate (DAP), an intermediate involved in the bacterial biosynthesis of lysine and meso-diaminopimelic acid, an essential component of bacterial cell walls. This Rhizobium leguminosarum bv. trifolii (strain WSM2304) protein is Succinyl-diaminopimelate desuccinylase.